Reading from the N-terminus, the 244-residue chain is 2,5-diamino-6-ribosylamino-4(3H)-pyrimidinone 5'-phosphate reductase (244 aa).

Residues Thr-79, Asp-83, Val-159, and 182-186 (GANVI) contribute to the NADP(+) site.

It belongs to the HTP reductase family. As to quaternary structure, homodimer.

The enzyme catalyses 2,5-diamino-6-(1-D-ribitylamino)pyrimidin-4(3H)-one 5'-phosphate + NADP(+) = 2,5-diamino-6-(1-D-ribosylamino)pyrimidin-4(3H)-one 5'-phosphate + NADPH + H(+). It catalyses the reaction 2,5-diamino-6-(1-D-ribitylamino)pyrimidin-4(3H)-one 5'-phosphate + NAD(+) = 2,5-diamino-6-(1-D-ribosylamino)pyrimidin-4(3H)-one 5'-phosphate + NADH + H(+). It participates in cofactor biosynthesis; riboflavin biosynthesis. Functionally, catalyzes an early step in riboflavin biosynthesis, the NADPH-dependent reduction of the ribose side chain of 2,5-diamino-6-ribosylamino-4(3H)-pyrimidinone 5'-phosphate, yielding 2,5-diamino-6-ribitylamino-4(3H)-pyrimidinone 5'-phosphate. This Saccharomyces cerevisiae (strain ATCC 204508 / S288c) (Baker's yeast) protein is 2,5-diamino-6-ribosylamino-4(3H)-pyrimidinone 5'-phosphate reductase (RIB7).